A 194-amino-acid polypeptide reads, in one-letter code: Pyridoxal 5'-phosphate synthase subunit PdxT (194 aa).

Position 54-56 (54-56 (GES)) interacts with L-glutamine. Cysteine 83 serves as the catalytic Nucleophile. L-glutamine contacts are provided by residues arginine 110 and 139-140 (IR). Active-site charge relay system residues include histidine 175 and glutamate 177.

Belongs to the glutaminase PdxT/SNO family. In terms of assembly, in the presence of PdxS, forms a dodecamer of heterodimers. Only shows activity in the heterodimer.

The enzyme catalyses aldehydo-D-ribose 5-phosphate + D-glyceraldehyde 3-phosphate + L-glutamine = pyridoxal 5'-phosphate + L-glutamate + phosphate + 3 H2O + H(+). The catalysed reaction is L-glutamine + H2O = L-glutamate + NH4(+). The protein operates within cofactor biosynthesis; pyridoxal 5'-phosphate biosynthesis. Its function is as follows. Catalyzes the hydrolysis of glutamine to glutamate and ammonia as part of the biosynthesis of pyridoxal 5'-phosphate. The resulting ammonia molecule is channeled to the active site of PdxS. The sequence is that of Pyridoxal 5'-phosphate synthase subunit PdxT from Methanoregula boonei (strain DSM 21154 / JCM 14090 / 6A8).